A 239-amino-acid chain; its full sequence is Small ribosomal subunit protein uS2 (239 aa).

This sequence belongs to the universal ribosomal protein uS2 family.

This Prochlorococcus marinus (strain MIT 9313) protein is Small ribosomal subunit protein uS2.